A 1002-amino-acid polypeptide reads, in one-letter code: MAASTRALFLSCFHGSGGGGGTSEVSRRLVLRPRYPSMPRRPRSAAVAGEGGEGGGGGGDGDLEAAAVGAEEEEKVAVFEVSGMTCAACAGSVEKAVKRLQGIHDAAVDVLGGRAQVVFYPAFVSEEKIRETIQDVGFEAKLIDEEVKEKNILVCRLHIKGMTCTSCASTVESILQVVPGVQRASVALATEEAEIRYDRRIVTASQLTHAVEETGFEAILITTGDDQSRIDLKVDGTLNERSIMIVKSSVQALPGVEDIKVDPELHKITISYKPDQTGPRDLIEVIESAASGDLTVSIYPEADGRQQHRHGEIKRYRQSFLWSLVFTIPVFLTSMVFMYIPGLKDGLEKKVINMMSIGELLRWILSTPVQFVIGRRFYTGAYKALSHGSSNMDVLIALGTNTAYFYSVYSILRAASSHNYMATDFFETSSMLISFILLGKYLEILAKGKTSEAIAKLMDLAPETATMLIYDHEGNVVGEKEIDSRLIQKNDVIKVVPGGKVASDGFVIWGQSHVNESMITGESRPVAKRKGDTVIGGTVNENGVLHVRATFVGSESALAQIVRLVESAQMAKAPVQKFADQISRVFVPLVIILSLLTWLAWFLAGRLHGYPNSWIPSSMDSFQLALQFGISVMVIACPCALGLATPTAVMVATGVGASQGVLIKGGQALESAQKVDCIVFDKTGTLTIGKPVVVNTRLLKNMVLREFYAYVAAAEVNSEHPLGKAVVEHAKKFHSEESHVWTEARDFISVTGHGVKAKISGRAVMVGNKSFMLTSGIDIPVEALEILTEEEEKAQTAIIVAMDQEVVGIISVSDPIKPNAREVISYLKSMKVESIMVTGDNWGTANAISKEVGIENTVAEAKPEQKAEKVKELQSAGRTVAMVGDGINDSPALVSADVGLAIGAGTDVAIEAADIVLMKSNLEDVITAIDLSRKTFFRIRMNYVWALGYNIIGIPIAAGVLFPSTRFRLPPWVAGAAMAASSVSVVCWSLLLRYYKSPKLGR.

Over residues 32–48 (RPRYPSMPRRPRSAAVA) the composition is skewed to low complexity. Residues 32-63 (RPRYPSMPRRPRSAAVAGEGGEGGGGGGDGDL) form a disordered region. A compositionally biased stretch (gly residues) spans 49 to 60 (GEGGEGGGGGGD). 3 HMA domains span residues 75–141 (KVAV…FEAK), 153–219 (LVCR…FEAI), and 228–294 (SRID…SGDL). Residues cysteine 86, cysteine 89, cysteine 164, and cysteine 167 each contribute to the Cu(+) site. Transmembrane regions (helical) follow at residues 320–340 (FLWS…FMYI), 354–374 (MMSI…FVIG), 392–412 (MDVL…YSIL), 425–445 (FFET…LEIL), 585–605 (VFVP…FLAG), 624–644 (LALQ…LGLA), 943–963 (YVWA…VLFP), and 972–992 (WVAG…SLLL).

Belongs to the cation transport ATPase (P-type) (TC 3.A.3) family. Type IB subfamily. In terms of tissue distribution, expressed in root pericycle cells, xylem region of diffuse vascular bundles in the first node, and vascular tissues of peduncle, rachis and husk.

The protein localises to the cell membrane. The catalysed reaction is Cu(+)(in) + ATP + H2O = Cu(+)(out) + ADP + phosphate + H(+). Functionally, copper (Cu) transporter that plays an essential role in promoting translocation of Cu from roots to shoots. Involved in loading Cu to the xylem of the roots and other organs, including panicles. The chain is Copper-transporting ATPase HMA5 from Oryza sativa subsp. japonica (Rice).